The chain runs to 378 residues: Cytochrome b (378 aa).

4 consecutive transmembrane segments (helical) span residues 34–54 (FGSL…FLAM), 78–99 (WLLR…YLHV), 114–134 (WLIG…GYVL), and 179–199 (FFTF…IHLL). Histidine 84 and histidine 98 together coordinate heme b. Heme b-binding residues include histidine 183 and histidine 197. Histidine 202 is an a ubiquinone binding site. A run of 4 helical transmembrane segments spans residues 227–247 (FKDI…VLIS), 289–309 (LGGV…PFYN), 321–341 (INQV…WIGA), and 348–368 (YVLI…VNPL).

This sequence belongs to the cytochrome b family. The main subunits of complex b-c1 are: cytochrome b, cytochrome c1 and the Rieske protein. Heme b is required as a cofactor.

It localises to the mitochondrion inner membrane. In terms of biological role, component of the ubiquinol-cytochrome c reductase complex (complex III or cytochrome b-c1 complex) that is part of the mitochondrial respiratory chain. The b-c1 complex mediates electron transfer from ubiquinol to cytochrome c. Contributes to the generation of a proton gradient across the mitochondrial membrane that is then used for ATP synthesis. The protein is Cytochrome b (mt:Cyt-b) of Drosophila melanogaster (Fruit fly).